The chain runs to 232 residues: GTP cyclohydrolase III (232 aa).

Belongs to the archaeal-type GTP cyclohydrolase family.

It carries out the reaction GTP + 3 H2O = 2-amino-5-formylamino-6-(5-phospho-D-ribosylamino)pyrimidin-4(3H)-one + 2 phosphate + 2 H(+). In terms of biological role, catalyzes the formation of 2-amino-5-formylamino-6-ribofuranosylamino-4(3H)-pyrimidinone ribonucleotide monophosphate and inorganic phosphate from GTP. Also has an independent pyrophosphate phosphohydrolase activity. This chain is GTP cyclohydrolase III, found in Saccharolobus islandicus (strain Y.G.57.14 / Yellowstone #1) (Sulfolobus islandicus).